Reading from the N-terminus, the 880-residue chain is Translation initiation factor IF-2 (880 aa).

A disordered region spans residues 1 to 251; sequence MVDTKNPGDK…PTAKPAPAKQ (251 aa). The span at 58-79 shows a compositional bias: low complexity; it reads PADAPAAPAPVAAAKPAPVRAP. Over residues 115–183 the composition is skewed to basic and acidic residues; it reads ARIRDEEERK…KRFGEEEAKK (69 aa). Low complexity-rich tracts occupy residues 184–215 and 233–250; these read AAAA…VAAD and AARP…APAK. Positions 376–547 constitute a tr-type G domain; that stretch reads PRSPVVTVMG…ALQAELLDLK (172 aa). The segment at 385–392 is G1; that stretch reads GHVDHGKT. Position 385–392 (385–392) interacts with GTP; sequence GHVDHGKT. Residues 410 to 414 form a G2 region; the sequence is GITQH. Positions 433-436 are G3; sequence DTPG. Residues 433-437 and 487-490 each bind GTP; these read DTPGH and NKID. Positions 487-490 are G4; that stretch reads NKID. Residues 523–525 are G5; sequence SAK.

The protein belongs to the TRAFAC class translation factor GTPase superfamily. Classic translation factor GTPase family. IF-2 subfamily.

The protein resides in the cytoplasm. Its function is as follows. One of the essential components for the initiation of protein synthesis. Protects formylmethionyl-tRNA from spontaneous hydrolysis and promotes its binding to the 30S ribosomal subunits. Also involved in the hydrolysis of GTP during the formation of the 70S ribosomal complex. In Rhodopseudomonas palustris (strain BisB18), this protein is Translation initiation factor IF-2.